The chain runs to 209 residues: MADFYYLPGSSPCRSVIMTAKAVGVELNKKLLNLQAGEHLKPEFLKINPQHTIPTLVDNGFALWESRAIQVYLVEKYGKTDSLYPKCPKKRAVINQRLYFDMGTLYQSFANYYYPQVFAKAPADPEAFKKIESAFEFLNTFLEGQEYAAGDSLTVADIALVASVSTFEVAGFEISKYANVNKWYENAKKVTPGWEENWAGCLEFKKYFE.

Residues 1–81 (MADFYYLPGS…YLVEKYGKTD (81 aa)) form the GST N-terminal domain. Glutathione-binding positions include Ser10, 51 to 53 (HTI), and 65 to 67 (ESR). The 123-residue stretch at 87-209 (CPKKRAVINQ…GCLEFKKYFE (123 aa)) folds into the GST C-terminal domain.

It belongs to the GST superfamily. Theta family. Homodimer.

The enzyme catalyses RX + glutathione = an S-substituted glutathione + a halide anion + H(+). The catalysed reaction is 1,1,1-trichloro-2,2-bis(4-chlorophenyl)ethane = 1,1-dichloro-2,2-bis(4-chlorophenyl)ethylene + chloride + H(+). Its function is as follows. Conjugation of reduced glutathione to a wide number of exogenous and endogenous hydrophobic electrophiles. Has DDT dehydrochlorinase activity. This is Glutathione S-transferase 1-1 (GstD1) from Drosophila simulans (Fruit fly).